Reading from the N-terminus, the 155-residue chain is Ribosomal RNA large subunit methyltransferase H (155 aa).

Residues Leu-73, Gly-104, and 123–128 contribute to the S-adenosyl-L-methionine site; that span reads LSPLTL.

Belongs to the RNA methyltransferase RlmH family. As to quaternary structure, homodimer.

The protein localises to the cytoplasm. The catalysed reaction is pseudouridine(1915) in 23S rRNA + S-adenosyl-L-methionine = N(3)-methylpseudouridine(1915) in 23S rRNA + S-adenosyl-L-homocysteine + H(+). Functionally, specifically methylates the pseudouridine at position 1915 (m3Psi1915) in 23S rRNA. The chain is Ribosomal RNA large subunit methyltransferase H from Pseudomonas savastanoi pv. phaseolicola (strain 1448A / Race 6) (Pseudomonas syringae pv. phaseolicola (strain 1448A / Race 6)).